The primary structure comprises 729 residues: Phosphoribosylformylglycinamidine synthase subunit PurL (729 aa).

His54 is a catalytic residue. Positions 57 and 96 each coordinate ATP. Glu98 contacts Mg(2+). Substrate contacts are provided by residues 99 to 102 and Arg121; that span reads SHNH. The Proton acceptor role is filled by His100. Asp122 serves as a coordination point for Mg(2+). A substrate-binding site is contributed by Gln245. Asp273 contributes to the Mg(2+) binding site. 317-319 contacts substrate; sequence ETQ. ATP contacts are provided by Asp495 and Gly532. Asn533 provides a ligand contact to Mg(2+). Ser535 contacts substrate.

It belongs to the FGAMS family. Monomer. Part of the FGAM synthase complex composed of 1 PurL, 1 PurQ and 2 PurS subunits.

It is found in the cytoplasm. It carries out the reaction N(2)-formyl-N(1)-(5-phospho-beta-D-ribosyl)glycinamide + L-glutamine + ATP + H2O = 2-formamido-N(1)-(5-O-phospho-beta-D-ribosyl)acetamidine + L-glutamate + ADP + phosphate + H(+). It functions in the pathway purine metabolism; IMP biosynthesis via de novo pathway; 5-amino-1-(5-phospho-D-ribosyl)imidazole from N(2)-formyl-N(1)-(5-phospho-D-ribosyl)glycinamide: step 1/2. Its function is as follows. Part of the phosphoribosylformylglycinamidine synthase complex involved in the purines biosynthetic pathway. Catalyzes the ATP-dependent conversion of formylglycinamide ribonucleotide (FGAR) and glutamine to yield formylglycinamidine ribonucleotide (FGAM) and glutamate. The FGAM synthase complex is composed of three subunits. PurQ produces an ammonia molecule by converting glutamine to glutamate. PurL transfers the ammonia molecule to FGAR to form FGAM in an ATP-dependent manner. PurS interacts with PurQ and PurL and is thought to assist in the transfer of the ammonia molecule from PurQ to PurL. The chain is Phosphoribosylformylglycinamidine synthase subunit PurL from Staphylococcus epidermidis (strain ATCC 12228 / FDA PCI 1200).